A 670-amino-acid chain; its full sequence is Probable metal-nicotianamine transporter YSL4 (670 aa).

Transmembrane regions (helical) follow at residues 35-55 (ITIR…IITH), 59-79 (LTIG…FFFI), 107-127 (CVVS…LIAM), 151-171 (GLWW…FCLV), 273-293 (LVNC…WPFI), 318-338 (VFIA…KIIV), 389-409 (FAVS…PLIF), 416-436 (FVLC…YGAG), 450-470 (GLFI…GLAA), 507-527 (LGTA…WTAF), 559-579 (PKHC…VNLI), 601-621 (FYIG…MLVW), and 636-656 (VASG…ILSI).

This sequence belongs to the YSL (TC 2.A.67.2) family.

It is found in the membrane. Functionally, may be involved in the transport of nicotianamine-chelated metals. The chain is Probable metal-nicotianamine transporter YSL4 (YSL4) from Arabidopsis thaliana (Mouse-ear cress).